The sequence spans 122 residues: MIQQESRLRVADNTGAREILCIRVLGGSGRRYASIGDVIVATVKDAIPGAGVKKGDVVKAVVVRTAKEKRRPDGSYIRFDENAAVIIKDGGDPRGTRIFGPVGRELRDKRFMKIISLAPEVL.

Belongs to the universal ribosomal protein uL14 family. As to quaternary structure, part of the 50S ribosomal subunit. Forms a cluster with proteins L3 and L19. In the 70S ribosome, L14 and L19 interact and together make contacts with the 16S rRNA in bridges B5 and B8.

Its function is as follows. Binds to 23S rRNA. Forms part of two intersubunit bridges in the 70S ribosome. This Salinispora tropica (strain ATCC BAA-916 / DSM 44818 / JCM 13857 / NBRC 105044 / CNB-440) protein is Large ribosomal subunit protein uL14.